The chain runs to 51 residues: Insulin (51 aa).

3 cysteine pairs are disulfide-bonded: cysteine 8/cysteine 37, cysteine 20/cysteine 50, and cysteine 36/cysteine 41.

The protein belongs to the insulin family. As to quaternary structure, heterodimer of a B chain and an A chain linked by two disulfide bonds.

The protein resides in the secreted. Functionally, insulin decreases blood glucose concentration. It increases cell permeability to monosaccharides, amino acids and fatty acids. It accelerates glycolysis, the pentose phosphate cycle, and glycogen synthesis in liver. This is Insulin from Pagrus major (Red sea bream).